The primary structure comprises 231 residues: Aminodeoxyfutalosine nucleosidase (231 aa).

The active-site Proton acceptor is Glu14. Substrate-binding positions include Gly81, Val155, and 175 to 176 (ME). Asp199 functions as the Proton donor in the catalytic mechanism.

Belongs to the PNP/UDP phosphorylase family. As to quaternary structure, homodimer.

It carries out the reaction 6-amino-6-deoxyfutalosine + H2O = dehypoxanthine futalosine + adenine. The catalysed reaction is S-adenosyl-L-homocysteine + H2O = S-(5-deoxy-D-ribos-5-yl)-L-homocysteine + adenine. The enzyme catalyses S-methyl-5'-thioadenosine + H2O = 5-(methylsulfanyl)-D-ribose + adenine. It catalyses the reaction 5'-deoxyadenosine + H2O = 5-deoxy-D-ribose + adenine. Its pathway is quinol/quinone metabolism; menaquinone biosynthesis. It functions in the pathway amino-acid biosynthesis; L-methionine biosynthesis via salvage pathway; S-methyl-5-thio-alpha-D-ribose 1-phosphate from S-methyl-5'-thioadenosine (hydrolase route): step 1/2. In terms of biological role, catalyzes the direct conversion of aminodeoxyfutalosine (AFL) into dehypoxanthine futalosine (DHFL) and adenine via the hydrolysis of the N-glycosidic bond; this reaction seems to represent an essential step in the menaquinone biosynthesis pathway in Helicobacter species. Can also probably catalyzes the hydrolysis of 5'-methylthioadenosine (MTA) and S-adenosylhomocysteine (SAH) to adenine and the corresponding thioribose, 5'-methylthioribose and S-ribosylhomocysteine, respectively. These other activities highlight the tremendous versatility of the enzyme, which also plays key roles in S-adenosylmethionine recycling and in the biosynthesis of the quorum-sensing molecule autoinducer-2. Does not act on futalosine (FL) as substrate. This chain is Aminodeoxyfutalosine nucleosidase (mtnN), found in Helicobacter pylori (strain ATCC 700392 / 26695) (Campylobacter pylori).